The chain runs to 200 residues: MGNHLTEMAPTTSFLPHFQALHVVVIGLDSAGKTSLLYRLKFKEFVQSIPTKGFNTEKIRVPLGGSRGITFQVWDVGGQEKLRPLWRSYTRRTDGLVFVVDAAEAERLEEAKVELHRISRASDNQGVPVLVLANKQDQPGALSAAEVEKRLAVRELATATLTHVQGCSAVDGLGLQPGLERLYEMILKRKKAARAGKKRR.

The N-myristoyl glycine moiety is linked to residue G2. GTP is bound by residues 27–34 (GLDSAGKT), 75–79 (DVGGQ), and 134–137 (NKQD).

The protein belongs to the small GTPase superfamily. Arf family. Interacts with CYTH2; the interaction is direct and ARL4D GTP-dependent. Does not interact with ARL4D.

The protein localises to the nucleus. The protein resides in the nucleolus. It is found in the cell membrane. It localises to the cytoplasm. In terms of biological role, small GTP-binding protein which cycles between an inactive GDP-bound and an active GTP-bound form, and the rate of cycling is regulated by guanine nucleotide exchange factors (GEF) and GTPase-activating proteins (GAP). GTP-binding protein that does not act as an allosteric activator of the cholera toxin catalytic subunit. Recruits CYTH1, CYTH2, CYTH3 and CYTH4 to the plasma membrane in GDP-bound form. The polypeptide is ADP-ribosylation factor-like protein 4D (ARL4D) (Bos taurus (Bovine)).